Here is a 479-residue protein sequence, read N- to C-terminus: Glycogen synthase (479 aa).

Residue Lys-16 coordinates ADP-alpha-D-glucose.

It belongs to the glycosyltransferase 1 family. Bacterial/plant glycogen synthase subfamily.

It catalyses the reaction [(1-&gt;4)-alpha-D-glucosyl](n) + ADP-alpha-D-glucose = [(1-&gt;4)-alpha-D-glucosyl](n+1) + ADP + H(+). Its pathway is glycan biosynthesis; glycogen biosynthesis. Synthesizes alpha-1,4-glucan chains using ADP-glucose. This is Glycogen synthase from Lactiplantibacillus plantarum (strain ATCC BAA-793 / NCIMB 8826 / WCFS1) (Lactobacillus plantarum).